A 149-amino-acid polypeptide reads, in one-letter code: Nucleoside diphosphate kinase (149 aa).

ATP-binding residues include lysine 9, phenylalanine 57, arginine 85, threonine 91, arginine 102, and asparagine 112. Histidine 115 (pros-phosphohistidine intermediate) is an active-site residue.

The protein belongs to the NDK family. In terms of assembly, homotetramer. The cofactor is Mg(2+).

It is found in the cytoplasm. It carries out the reaction dZDP + ATP = dZTP + ADP. The enzyme catalyses a 2'-deoxyribonucleoside 5'-diphosphate + ATP = a 2'-deoxyribonucleoside 5'-triphosphate + ADP. The catalysed reaction is a ribonucleoside 5'-diphosphate + ATP = a ribonucleoside 5'-triphosphate + ADP. It participates in purine metabolism. Its function is as follows. Major role in the synthesis of nucleoside triphosphates other than ATP. The ATP gamma phosphate is transferred to the NDP beta phosphate via a ping-pong mechanism, using a phosphorylated active-site intermediate. Functionally, (Microbial infection) Catalyzes the phosphorylation of dZDP to dZTP, when the bacterium is infected by a phage that produces the substrate for the synthesis of dZTP (2- amino-2'-deoxyadenosine 5'-triphosphate), which is then used by the phage as a DNA polymerase substrate. The polypeptide is Nucleoside diphosphate kinase (Synechococcus sp. (strain JA-3-3Ab) (Cyanobacteria bacterium Yellowstone A-Prime)).